The sequence spans 547 residues: CTP synthase (547 aa).

The amidoligase domain stretch occupies residues 1-265 (MARFIFITGG…DQAVLDAFQI (265 aa)). S13 is a binding site for CTP. S13 lines the UTP pocket. ATP is bound by residues 14–19 (SLGKGL) and D71. The Mg(2+) site is built by D71 and E139. CTP is bound by residues 146-148 (DIE), 186-191 (KTKPTQ), and K222. UTP contacts are provided by residues 186 to 191 (KTKPTQ) and K222. Residues 291–546 (KIAIVGKYVQ…VRAAKESSRL (256 aa)) form the Glutamine amidotransferase type-1 domain. G353 contacts L-glutamine. C380 serves as the catalytic Nucleophile; for glutamine hydrolysis. L-glutamine-binding positions include 381 to 384 (LGMQ), E404, and R474. Catalysis depends on residues H519 and E521.

It belongs to the CTP synthase family. In terms of assembly, homotetramer.

It carries out the reaction UTP + L-glutamine + ATP + H2O = CTP + L-glutamate + ADP + phosphate + 2 H(+). It catalyses the reaction L-glutamine + H2O = L-glutamate + NH4(+). The enzyme catalyses UTP + NH4(+) + ATP = CTP + ADP + phosphate + 2 H(+). Its pathway is pyrimidine metabolism; CTP biosynthesis via de novo pathway; CTP from UDP: step 2/2. With respect to regulation, allosterically activated by GTP, when glutamine is the substrate; GTP has no effect on the reaction when ammonia is the substrate. The allosteric effector GTP functions by stabilizing the protein conformation that binds the tetrahedral intermediate(s) formed during glutamine hydrolysis. Inhibited by the product CTP, via allosteric rather than competitive inhibition. Its function is as follows. Catalyzes the ATP-dependent amination of UTP to CTP with either L-glutamine or ammonia as the source of nitrogen. Regulates intracellular CTP levels through interactions with the four ribonucleotide triphosphates. In Ruegeria pomeroyi (strain ATCC 700808 / DSM 15171 / DSS-3) (Silicibacter pomeroyi), this protein is CTP synthase.